Reading from the N-terminus, the 401-residue chain is N-acetyllactosaminide beta-1,6-N-acetylglucosaminyl-transferase (401 aa).

Residues 1-7 (MPPSVRY) lie on the Cytoplasmic side of the membrane. The chain crosses the membrane as a helical; Signal-anchor for type II membrane protein span at residues 8 to 28 (FFIVSVTTVIVFIVLYVLSFG). The Lumenal portion of the chain corresponds to 29–401 (GDQSYQKLNI…EIAIQPSWYF (373 aa)). Asn37, Asn255, Asn315, and Asn389 each carry an N-linked (GlcNAc...) asparagine glycan.

It belongs to the glycosyltransferase 14 family.

Its subcellular location is the golgi apparatus membrane. The enzyme catalyses a beta-D-Gal-(1-&gt;4)-beta-D-GlcNAc-(1-&gt;3)-beta-D-Gal-(1-&gt;4)-beta-D-GlcNAc derivative + UDP-N-acetyl-alpha-D-glucosamine = a beta-D-Gal-(1-&gt;4)-beta-D-GlcNAc-(1-&gt;3)-[beta-D-GlcNAc-(1-&gt;6)]-beta-D-Gal-(1-&gt;4)-N-acetyl-beta-D-glucosaminyl derivative + UDP + H(+). Its pathway is protein modification; protein glycosylation. In terms of biological role, branching enzyme that converts linear into branched poly-N-acetyllactosaminoglycans. Introduces the blood group I antigen during embryonic development. It is closely associated with the development and maturation of erythroid cells. This is N-acetyllactosaminide beta-1,6-N-acetylglucosaminyl-transferase (Gcnt2) from Mus musculus (Mouse).